The sequence spans 672 residues: PHD finger protein MALE STERILITY 1 (672 aa).

Residues 614–664 form a PHD-type zinc finger; sequence RIECECGATEEDGERMVCCDICEVWQHTRCVGVQHNEEVPRIFLCQSCDQH.

As to expression, in closed flower buds, especially in anthers.

The protein localises to the nucleus. Its function is as follows. Transcriptional activator required for anther and post-meiotic pollen development and maturation. Seems to regulate inflorescence branching and floral development. May control tapetal development by directly regulating tapetal programmed cell death (PCD) and breakdown. Implicated in pollen cytosolic components and wall development (e.g. exine and intine formation). In Arabidopsis thaliana (Mouse-ear cress), this protein is PHD finger protein MALE STERILITY 1 (MS1).